The sequence spans 211 residues: Uracil phosphoribosyltransferase (211 aa).

Residues R77, R102, and 129 to 137 (DPMLATGGS) each bind 5-phospho-alpha-D-ribose 1-diphosphate. Residues I192 and 197-199 (GDA) each bind uracil. D198 contacts 5-phospho-alpha-D-ribose 1-diphosphate.

This sequence belongs to the UPRTase family. The cofactor is Mg(2+).

It carries out the reaction UMP + diphosphate = 5-phospho-alpha-D-ribose 1-diphosphate + uracil. It functions in the pathway pyrimidine metabolism; UMP biosynthesis via salvage pathway; UMP from uracil: step 1/1. With respect to regulation, allosterically activated by GTP. Its function is as follows. Catalyzes the conversion of uracil and 5-phospho-alpha-D-ribose 1-diphosphate (PRPP) to UMP and diphosphate. The chain is Uracil phosphoribosyltransferase from Corynebacterium aurimucosum (strain ATCC 700975 / DSM 44827 / CIP 107346 / CN-1) (Corynebacterium nigricans).